The following is a 106-amino-acid chain: Iron-sulfur cluster assembly protein CyaY (106 aa).

This sequence belongs to the frataxin family.

Functionally, involved in iron-sulfur (Fe-S) cluster assembly. May act as a regulator of Fe-S biogenesis. In Escherichia coli O9:H4 (strain HS), this protein is Iron-sulfur cluster assembly protein CyaY.